A 751-amino-acid chain; its full sequence is Catalase-peroxidase (751 aa).

Residues 1 to 21 are disordered; it reads MSNESKCPFHQTAGGGTTNRD. Residues 90–244 constitute a cross-link (tryptophyl-tyrosyl-methioninium (Trp-Tyr) (with M-270)); it reads WHSAGTYRIG…LAAVQMGLIY (155 aa). The active-site Proton acceptor is H91. The tract at residues 195-227 is disordered; the sequence is YGKDQVKAQPPGQGDLVAEPAKHGEEQNRDLSA. The span at 214–227 shows a compositional bias: basic and acidic residues; sequence PAKHGEEQNRDLSA. The tryptophyl-tyrosyl-methioninium (Tyr-Met) (with W-90) cross-link spans 244–270; sequence YVNPEGPEGNPDPVASGKDIRETFGRM. H285 serves as a coordination point for heme b. The tract at residues 364 to 385 is disordered; that stretch reads GAHQWRPKDGKGAGTVPDAHDP.

It belongs to the peroxidase family. Peroxidase/catalase subfamily. In terms of assembly, homodimer or homotetramer. Heme b serves as cofactor. In terms of processing, formation of the three residue Trp-Tyr-Met cross-link is important for the catalase, but not the peroxidase activity of the enzyme.

It catalyses the reaction H2O2 + AH2 = A + 2 H2O. The catalysed reaction is 2 H2O2 = O2 + 2 H2O. In terms of biological role, bifunctional enzyme with both catalase and broad-spectrum peroxidase activity. The chain is Catalase-peroxidase from Pseudomonas putida (strain ATCC 47054 / DSM 6125 / CFBP 8728 / NCIMB 11950 / KT2440).